The chain runs to 236 residues: Activating transcription factor of chaperone (236 aa).

A disordered region spans residues 117–185 (HRASQLASPQ…KNAATRYRQK (69 aa)). The segment covering 120 to 137 (SQLASPQHSSSSANASPR) has biased composition (low complexity). Positions 162–175 (RPVDDRRSRKKEQN) are enriched in basic and acidic residues. The bZIP domain occupies 165 to 228 (DDRRSRKKEQ…RYLKALMRDL (64 aa)). A basic motif region spans residues 167–187 (RRSRKKEQNKNAATRYRQKKK). The interval 193-228 (LLKEEQTLRQRHTELGEKCSDLQREIRYLKALMRDL) is leucine-zipper.

Belongs to the bZIP family. As to quaternary structure, binds DNA as a dimer.

The protein resides in the nucleus. Transcriptional activator that acts in the unfolded protein response (UPR) pathway. Acts during endoplasmic reticulum (ER) stress by activating UPR target genes via direct binding to the UPR element (UPRE) (5'-GGAACTGGACAGCGTGTCGAAA-3'). Activates expression of ER chaperones ERP72 and PDI. The polypeptide is Activating transcription factor of chaperone (Bombyx mori (Silk moth)).